The following is a 197-amino-acid chain: Non-structural protein 5 (197 aa).

Residues 17 to 30 are compositionally biased toward low complexity; it reads IFKNESSSTTSTLS. The disordered stretch occupies residues 17-36; it reads IFKNESSSTTSTLSGKSIGR. Residue serine 67 is modified to Phosphoserine; by host CK1. Position 92 (aspartate 92) interacts with Mg(2+). Positions 131-167 are disordered; sequence DHKKEKSKKDKSRKHYPRIEADSDSEDYVLDDSDSDD. Acidic residues predominate over residues 152 to 165; sequence DSDSEDYVLDDSDS. Phosphoserine; by host is present on residues serine 153, serine 155, serine 163, and serine 165.

This sequence belongs to the rotavirus NSP5 family. In terms of assembly, homodimer. Interacts with VP1. Interacts with VP2. Interacts with NSP2; this interaction leads to up-regulation of NSP5 hyperphosphorylation and formation of virus factories. Interacts with NSP6. Participates in the selective exclusion of host proteins from stress granules (SG) and P bodies (PB). Also participates in the sequestration of these remodeled organelles in viral factories. It depends on Mg(2+) as a cofactor. O-glycosylated. In terms of processing, hyperphosphorylated on serine residues, when in dimeric form. Phosphorylation by host CK1 is required for the hyperphosphorylation of NSP5 dimer.

Its subcellular location is the host cytoplasm. Plays an essential role in the viral genome replication. Participates, together with NSP2, in the formation of viral factories (viroplasms), which are large inclusions in the host cytoplasm where replication intermediates are assembled and viral RNA replication takes place. Orchestrates the recruitment of viroplasmic proteins such as capsid proteins to these factories. Participates in the selective exclusion of host proteins from stress granules (SG) and P bodies (PB). Also participates in the sequestration of these remodeled organelles in viral factories. In Homo sapiens (Human), this protein is Non-structural protein 5.